A 132-amino-acid polypeptide reads, in one-letter code: Flagellar basal body rod protein FlgB (132 aa).

Belongs to the flagella basal body rod proteins family. The basal body constitutes a major portion of the flagellar organelle and consists of a number of rings mounted on a central rod. In Gram-negative bacteria, at least four rings, L, P, S and M are present, whereas Gram-positive bacteria lack the L and P rings. The rod consists of about 26 subunits of FlgG in the distal portion, and FlgB, FlgC and FlgF build up the proximal portion of the rod with about 6 subunits each. Rod assembly occurs by export via the flagellum-specific pathway of its constituent proteins and by their incorporation into the rod structure in the probable order of FlgB, FlgC, FlgF and FlgG. Another protein, FliE, also assembles onto the stable rod structure.

Its subcellular location is the bacterial flagellum basal body. Structural component of flagellum, the bacterial motility apparatus. Part of the rod structure of flagellar basal body. In Aeromonas hydrophila, this protein is Flagellar basal body rod protein FlgB.